A 270-amino-acid polypeptide reads, in one-letter code: Glutamate racemase (270 aa).

Substrate is bound by residues 14–15 (DS) and 46–47 (YG). C77 (proton donor/acceptor) is an active-site residue. 78–79 (NT) provides a ligand contact to substrate. The active-site Proton donor/acceptor is the C189. 190–191 (TH) lines the substrate pocket.

This sequence belongs to the aspartate/glutamate racemases family.

The enzyme catalyses L-glutamate = D-glutamate. It participates in cell wall biogenesis; peptidoglycan biosynthesis. In terms of biological role, provides the (R)-glutamate required for cell wall biosynthesis. This chain is Glutamate racemase, found in Neisseria gonorrhoeae (strain ATCC 700825 / FA 1090).